We begin with the raw amino-acid sequence, 555 residues long: Urocanate hydratase (555 aa).

Residues 51-52, Gln-129, 175-177, Glu-195, 262-266, 272-273, and Tyr-321 each bind NAD(+); these read GG, GMG, QTSAH, and YL. Residue Cys-409 is part of the active site. Gly-491 contributes to the NAD(+) binding site.

It belongs to the urocanase family. NAD(+) serves as cofactor.

The protein resides in the cytoplasm. The enzyme catalyses 4-imidazolone-5-propanoate = trans-urocanate + H2O. Its pathway is amino-acid degradation; L-histidine degradation into L-glutamate; N-formimidoyl-L-glutamate from L-histidine: step 2/3. Functionally, catalyzes the conversion of urocanate to 4-imidazolone-5-propionate. The protein is Urocanate hydratase of Xanthomonas campestris pv. campestris (strain ATCC 33913 / DSM 3586 / NCPPB 528 / LMG 568 / P 25).